The chain runs to 501 residues: Lysine--tRNA ligase (501 aa).

Mg(2+) is bound by residues Glu412 and Glu419.

This sequence belongs to the class-II aminoacyl-tRNA synthetase family. Homodimer. Requires Mg(2+) as cofactor.

The protein resides in the cytoplasm. It carries out the reaction tRNA(Lys) + L-lysine + ATP = L-lysyl-tRNA(Lys) + AMP + diphosphate. The polypeptide is Lysine--tRNA ligase (Dechloromonas aromatica (strain RCB)).